The following is a 191-amino-acid chain: dTTP/UTP pyrophosphatase (191 aa).

D75 acts as the Proton acceptor in catalysis.

The protein belongs to the Maf family. YhdE subfamily. A divalent metal cation is required as a cofactor.

It is found in the cytoplasm. The catalysed reaction is dTTP + H2O = dTMP + diphosphate + H(+). It carries out the reaction UTP + H2O = UMP + diphosphate + H(+). Nucleoside triphosphate pyrophosphatase that hydrolyzes dTTP and UTP. May have a dual role in cell division arrest and in preventing the incorporation of modified nucleotides into cellular nucleic acids. The chain is dTTP/UTP pyrophosphatase from Aliivibrio fischeri (strain ATCC 700601 / ES114) (Vibrio fischeri).